Here is a 110-residue protein sequence, read N- to C-terminus: Large ribosomal subunit protein uL22 (110 aa).

This sequence belongs to the universal ribosomal protein uL22 family. In terms of assembly, part of the 50S ribosomal subunit.

This protein binds specifically to 23S rRNA; its binding is stimulated by other ribosomal proteins, e.g. L4, L17, and L20. It is important during the early stages of 50S assembly. It makes multiple contacts with different domains of the 23S rRNA in the assembled 50S subunit and ribosome. Its function is as follows. The globular domain of the protein is located near the polypeptide exit tunnel on the outside of the subunit, while an extended beta-hairpin is found that lines the wall of the exit tunnel in the center of the 70S ribosome. This is Large ribosomal subunit protein uL22 from Yersinia enterocolitica serotype O:8 / biotype 1B (strain NCTC 13174 / 8081).